Here is a 108-residue protein sequence, read N- to C-terminus: uncharacterized protein (108 aa).

This sequence to M.jannaschii MJ1245 and M.thermoautotrophicum MTH1110.

This is an uncharacterized protein from Methanocaldococcus jannaschii (strain ATCC 43067 / DSM 2661 / JAL-1 / JCM 10045 / NBRC 100440) (Methanococcus jannaschii).